Consider the following 102-residue polypeptide: Large ribosomal subunit protein bL21 (102 aa).

Residues 79–91 are compositionally biased toward basic residues; it reads RKDSKRKKGHRQP. Residues 79 to 102 are disordered; the sequence is RKDSKRKKGHRQPYTKLTIDKINA.

It belongs to the bacterial ribosomal protein bL21 family. Part of the 50S ribosomal subunit. Contacts protein L20.

Functionally, this protein binds to 23S rRNA in the presence of protein L20. The chain is Large ribosomal subunit protein bL21 from Staphylococcus carnosus (strain TM300).